The following is a 622-amino-acid chain: Cilia- and flagella-associated protein 206 (622 aa).

The protein belongs to the CFAP206 family.

It is found in the cytoplasm. It localises to the cytoskeleton. The protein resides in the cilium axoneme. Its subcellular location is the cilium basal body. Its function is as follows. Essential for sperm motility and is involved in the regulation of the beating frequency of motile cilia on the epithelial cells of the respiratory tract. Required for the establishment of radial spokes in sperm flagella. The polypeptide is Cilia- and flagella-associated protein 206 (Bos taurus (Bovine)).